A 127-amino-acid polypeptide reads, in one-letter code: Protein translocase subunit SecE (127 aa).

Transmembrane regions (helical) follow at residues valine 17–tyrosine 37, leucine 41–tyrosine 61, and phenylalanine 95–isoleucine 115.

It belongs to the SecE/SEC61-gamma family. As to quaternary structure, component of the Sec protein translocase complex. Heterotrimer consisting of SecY, SecE and SecG subunits. The heterotrimers can form oligomers, although 1 heterotrimer is thought to be able to translocate proteins. Interacts with the ribosome. Interacts with SecDF, and other proteins may be involved. Interacts with SecA.

Its subcellular location is the cell inner membrane. In terms of biological role, essential subunit of the Sec protein translocation channel SecYEG. Clamps together the 2 halves of SecY. May contact the channel plug during translocation. The chain is Protein translocase subunit SecE from Buchnera aphidicola subsp. Acyrthosiphon pisum (strain APS) (Acyrthosiphon pisum symbiotic bacterium).